A 394-amino-acid chain; its full sequence is Ribulose bisphosphate carboxylase large chain (394 aa).

Residue lysine 5 is modified to N6,N6,N6-trimethyllysine. Substrate is bound by residues asparagine 114 and threonine 164. The active-site Proton acceptor is the lysine 166. Residue lysine 168 participates in substrate binding. Positions 192, 194, and 195 each coordinate Mg(2+). Residue lysine 192 is modified to N6-carboxylysine. Histidine 285 functions as the Proton acceptor in the catalytic mechanism. Residues arginine 286, histidine 318, and serine 370 each contribute to the substrate site.

It belongs to the RuBisCO large chain family. Type I subfamily. Heterohexadecamer of 8 large chains and 8 small chains. The cofactor is Mg(2+).

It is found in the plastid. The protein resides in the chloroplast. It catalyses the reaction 2 (2R)-3-phosphoglycerate + 2 H(+) = D-ribulose 1,5-bisphosphate + CO2 + H2O. The enzyme catalyses D-ribulose 1,5-bisphosphate + O2 = 2-phosphoglycolate + (2R)-3-phosphoglycerate + 2 H(+). Functionally, ruBisCO catalyzes two reactions: the carboxylation of D-ribulose 1,5-bisphosphate, the primary event in carbon dioxide fixation, as well as the oxidative fragmentation of the pentose substrate in the photorespiration process. Both reactions occur simultaneously and in competition at the same active site. This Barclaya longifolia (Orchid lily) protein is Ribulose bisphosphate carboxylase large chain (rbcL).